Here is a 282-residue protein sequence, read N- to C-terminus: Nudix hydrolase 7 (282 aa).

Positions 101–233 (SHVVGAGALV…KNEMFKFMAN (133 aa)) constitute a Nudix hydrolase domain. Positions 139-160 (GVINEGEDIWTGVAREVEEETG) match the Nudix box motif. Residues glutamate 154 and glutamate 158 each contribute to the Mg(2+) site.

This sequence belongs to the Nudix hydrolase family. Homodimer. Interacts with RACK1A, GG1 and GG2. It depends on Mg(2+) as a cofactor. Expressed in stems, leaves, roots, flowers and siliques.

The protein localises to the nucleus. It is found in the cytoplasm. The protein resides in the cell membrane. It catalyses the reaction ADP-D-ribose + H2O = D-ribose 5-phosphate + AMP + 2 H(+). It carries out the reaction NAD(+) + H2O = beta-nicotinamide D-ribonucleotide + AMP + 2 H(+). The catalysed reaction is NADH + H2O = reduced beta-nicotinamide D-ribonucleotide + AMP + 2 H(+). Not inhibited by fluoride. Functionally, mediates the hydrolysis of some nucleoside diphosphate derivatives. Can use both NADH and ADP-ribose as substrates, but not 8-oxo-dGTP, cyclic ADP-ribose, GDP-mannose, UDP-glucose, ATP, or GTP. Exerts negative control of EDS1 signaling. The sequence is that of Nudix hydrolase 7 (NUDT7) from Arabidopsis thaliana (Mouse-ear cress).